A 407-amino-acid chain; its full sequence is Lysophospholipid transporter LplT (407 aa).

11 helical membrane passes run 18 to 38 (AVII…FATL), 53 to 73 (FLQM…GQIA), 91 to 111 (AGAL…LVGV), 139 to 159 (LMEA…GVLA), 163 to 183 (IYGA…ANML), 229 to 249 (WGAG…ALGI), 257 to 277 (LLNA…AKLV), 286 to 306 (LPAG…HNLM), 310 to 330 (SLLI…NALL), 343 to 365 (AIAV…YSLV), and 375 to 395 (IGIG…VWLI).

The protein belongs to the major facilitator superfamily. LplT (TC 2.A.1.42) family.

It is found in the cell inner membrane. Its function is as follows. Catalyzes the facilitated diffusion of 2-acyl-glycero-3-phosphoethanolamine (2-acyl-GPE) into the cell. The sequence is that of Lysophospholipid transporter LplT from Pectobacterium carotovorum subsp. carotovorum (strain PC1).